Reading from the N-terminus, the 345-residue chain is rRNA 2'-O-methyltransferase fibrillarin (345 aa).

The disordered stretch occupies residues 1-114 (MGKPGFSPRG…GFKGGKTVTI (114 aa)). A compositionally biased stretch (gly residues) spans 8-108 (PRGGGGGGGG…RGGGAGGFKG (101 aa)). Asymmetric dimethylarginine is present on residues arginine 9, arginine 23, arginine 25, arginine 41, arginine 43, arginine 49, arginine 52, arginine 59, arginine 64, arginine 72, arginine 78, arginine 84, arginine 89, arginine 94, and arginine 99. Residues 198-199 (TT), 217-218 (EF), 242-243 (DA), and 262-265 (DVAQ) contribute to the S-adenosyl-L-methionine site.

The protein belongs to the methyltransferase superfamily. Fibrillarin family. In terms of assembly, component of box C/D small nucleolar ribonucleoprotein (snoRNP) particles. It is associated with the U3, U8 and U13 small nuclear RNAs. By homology to other fibrillarins, some or all of the N-terminal domain arginines are modified to asymmetric dimethylarginine (DMA).

Its subcellular location is the nucleus. The protein localises to the nucleolus. The enzyme catalyses L-glutaminyl-[histone H2A] + S-adenosyl-L-methionine = N(5)-methyl-L-glutaminyl-[histone H2A] + S-adenosyl-L-homocysteine + H(+). Functionally, S-adenosyl-L-methionine-dependent methyltransferase that has the ability to methylate both RNAs and proteins. Involved in pre-rRNA processing. Utilizes the methyl donor S-adenosyl-L-methionine to catalyze the site-specific 2'-hydroxyl methylation of ribose moieties in pre-ribosomal RNA. Site specificity is provided by a guide RNA that base pairs with the substrate. Methylation occurs at a characteristic distance from the sequence involved in base pairing with the guide RNA. Also acts as a protein methyltransferase by mediating methylation of 'Gln-105' of histone H2A (H2AQ105me), a modification that impairs binding of the FACT complex and is specifically present at 35S ribosomal DNA locus. This is rRNA 2'-O-methyltransferase fibrillarin from Drosophila erecta (Fruit fly).